The following is a 428-amino-acid chain: uncharacterized protein (428 aa).

12 helical membrane-spanning segments follow: residues 14 to 34 (LYDWANSAYSIVVTTAVFPLF), 55 to 75 (YTIAISTFILAMLGPILGTIA), 84 to 104 (FFGFFVSAGVASTAMLAFIPS), 107 to 127 (WLLLLLFYTVSAIGFSGANVF), 149 to 169 (FGLGYIGSTIPFIISIAVILL), 182 to 202 (ASQLSFFITAAWWGLFTIPMI), 238 to 258 (LFLFLLAYFFYIDGVGTIITM), 272 to 292 (SLLIILFVTQVVAAPFSIIYG), 302 to 322 (TMLYVGIVIYMIVCVYAYFME), 324 to 344 (TLDFWILAMLVATSQGGIQAL), 361 to 381 (FFGFYNIFGKFASIMGPLLIA), and 392 to 412 (TAVFSLIILFVIGIVILAFVP).

The protein belongs to the major facilitator superfamily.

Its subcellular location is the cell membrane. This is an uncharacterized protein from Bacillus subtilis (strain 168).